Here is a 101-residue protein sequence, read N- to C-terminus: Small ribosomal subunit protein uS14 (101 aa).

The protein belongs to the universal ribosomal protein uS14 family. As to quaternary structure, part of the 30S ribosomal subunit. Contacts proteins S3 and S10.

Binds 16S rRNA, required for the assembly of 30S particles and may also be responsible for determining the conformation of the 16S rRNA at the A site. The sequence is that of Small ribosomal subunit protein uS14 from Shewanella putrefaciens (strain CN-32 / ATCC BAA-453).